A 95-amino-acid polypeptide reads, in one-letter code: Large ribosomal subunit protein bL25 (95 aa).

Belongs to the bacterial ribosomal protein bL25 family. In terms of assembly, part of the 50S ribosomal subunit; part of the 5S rRNA/L5/L18/L25 subcomplex. Contacts the 5S rRNA. Binds to the 5S rRNA independently of L5 and L18.

Functionally, this is one of the proteins that binds to the 5S RNA in the ribosome where it forms part of the central protuberance. The chain is Large ribosomal subunit protein bL25 from Mannheimia succiniciproducens (strain KCTC 0769BP / MBEL55E).